We begin with the raw amino-acid sequence, 391 residues long: 4-hydroxy-3-methylbut-2-en-1-yl diphosphate synthase (flavodoxin) (391 aa).

[4Fe-4S] cluster is bound by residues Cys281, Cys284, Cys316, and Glu323. The segment at Glu372 to Ser391 is disordered.

Belongs to the IspG family. [4Fe-4S] cluster is required as a cofactor.

It carries out the reaction (2E)-4-hydroxy-3-methylbut-2-enyl diphosphate + oxidized [flavodoxin] + H2O + 2 H(+) = 2-C-methyl-D-erythritol 2,4-cyclic diphosphate + reduced [flavodoxin]. It functions in the pathway isoprenoid biosynthesis; isopentenyl diphosphate biosynthesis via DXP pathway; isopentenyl diphosphate from 1-deoxy-D-xylulose 5-phosphate: step 5/6. In terms of biological role, converts 2C-methyl-D-erythritol 2,4-cyclodiphosphate (ME-2,4cPP) into 1-hydroxy-2-methyl-2-(E)-butenyl 4-diphosphate. This chain is 4-hydroxy-3-methylbut-2-en-1-yl diphosphate synthase (flavodoxin), found in Renibacterium salmoninarum (strain ATCC 33209 / DSM 20767 / JCM 11484 / NBRC 15589 / NCIMB 2235).